The sequence spans 295 residues: Putative aquaporin-12B (295 aa).

Residues 1 to 22 (MAGLNVSLSFFFATFTLCEAAR) lie on the Cytoplasmic side of the membrane. The helical transmembrane segment at 23–41 (RASKALLPVGAYEVFAREA) threads the bilayer. At 42–55 (MRTLVELGPWAGDF) the chain is on the extracellular side. The chain crosses the membrane as a helical span at residues 56–74 (GPDLLLTLLFLLFLAHGVT). Residues 75–76 (LD) are Cytoplasmic-facing. The discontinuously helical intramembrane region spans 77 to 114 (GASANPTVSLQEFLMAEESLPGTLLKLAAQGLGMQAAC). Residues 81 to 83 (NPT) carry the NPA 1 motif. Over 115–120 (TLTRLC) the chain is Cytoplasmic. Residues 121-142 (WAWELSDLHLLQSLMAQSCSSA) form a helical membrane-spanning segment. Topologically, residues 143–145 (LRT) are extracellular. Residues 146 to 166 (SVPHGALVEAACAFCFHLTLL) form a helical membrane-spanning segment. Over 167-174 (HLRHSPPA) the chain is Cytoplasmic. A helical transmembrane segment spans residues 175–191 (YSGPAVALLVTVTAYTA). The Extracellular portion of the chain corresponds to 192–194 (GPF). The discontinuously helical intramembrane region spans 195-206 (TSAFFNPALAAS). The short motif at 200-202 (NPA) is the NPA 2 element. Residues 207–223 (VTFACSGHTLLEYVQVY) are Extracellular-facing. A helical membrane pass occupies residues 224–244 (WLGPLTGMVLAVLLHQGRLPH). Over 245 to 295 (LFQRNLFYGQKNKYRAPRGKPAPASGDTQTPAKGSSVREPGRSGVEGPHSS) the chain is Cytoplasmic. Residues 257–295 (KYRAPRGKPAPASGDTQTPAKGSSVREPGRSGVEGPHSS) form a disordered region.

This sequence belongs to the MIP/aquaporin (TC 1.A.8) family. AQP11/AQP12 subfamily. In terms of assembly, homotetramer; each monomer provides an independent water pore.

Its subcellular location is the membrane. It catalyses the reaction H2O(in) = H2O(out). Functionally, putative aquaporin. Could form homotetrameric transmembrane channels, with each monomer independently mediating water transport across the plasma membrane along its osmotic gradient. The protein is Putative aquaporin-12B of Homo sapiens (Human).